A 395-amino-acid polypeptide reads, in one-letter code: Zinc-regulated GTPase metalloprotein activator 1F (395 aa).

Residues 1-22 (MLPAVGSVDEEEDPAEEDCPEL) are disordered. The span at 8-20 (VDEEEDPAEEDCP) shows a compositional bias: acidic residues. The short motif at 17-24 (EDCPELVP) is the psi-PxLVp motif element. 49-56 (GYLGAGKT) is a binding site for GTP. Zn(2+) is bound by residues cysteine 107, cysteine 109, and cysteine 110. Residues 107-110 (CLCC) carry the CXCC motif motif. GTP is bound by residues 110–114 (CSVKD) and 203–206 (NKTD). The 104-residue stretch at 274–377 (IVTITFDVPG…ILKQLFIATV (104 aa)) folds into the CobW C-terminal domain.

The protein belongs to the SIMIBI class G3E GTPase family. ZNG1 subfamily.

Its subcellular location is the nucleus. The catalysed reaction is GTP + H2O = GDP + phosphate + H(+). In terms of biological role, zinc chaperone that directly transfers zinc cofactor to target metalloproteins, thereby activating them. Catalyzes zinc insertion into the active site of methionine aminopeptidase METAP1, which function to cleave the initiator methionine from polypeptides during or after protein translation. Mechanistically, the N-terminal psi-PxLVp motif binds to the C6H2-type zinc finger of inactive form of METAP1. After formation of the docked complex, zinc is transferred from the CXCC motif in the GTPase domain of ZNG1F to the zinc binding site in the peptidase domain of METAP1 in a process requiring GTP hydrolysis. GTP/GDP exchange is required for release of active METAP1. The protein is Zinc-regulated GTPase metalloprotein activator 1F of Homo sapiens (Human).